The sequence spans 527 residues: MSLCGARANAKMMAAYNGGTSAAAAGHHHHHHHHLPHLPPPHLHHHHHPQHHLHPGSAAAVHPVQQHTSSAAAAAAAAAAAAAMLNPGQQQPYFPSPAPGQAPGPAAAAPAQVQAAAAATVKAHHHQHSHHPQQQLDIEPDRPIGYGAFGVVWSVTDPRDGKRVALKKMPNVFQNLVSCKRVFRELKMLCFFKHDNVLSALDILQPPHIDYFEEIYVVTELMQSDLHKIIVSPQPLSSDHVKVFLYQILRGLKYLHSAGILHRDIKPGNLLVNSNCVLKICDFGLARVEELDESRHMTQEVVTQYYRAPEILMGSRHYSNAIDIWSVGCIFAELLGRRILFQAQSPIQQLDLITDLLGTPSLEAMRTACEGAKAHILRGPHKQPSLPVLYTLSSQATHEAVHLLCRMLVFDPSKRISAKDALAHPYLDEGRLRYHTCMCKCCFSTSTGRVYTSDFEPVTNPKFDDTFEKNLSSVRQVKEIIHQFILEQQKGNRVPLCINPQSAAFKSFISSTVAQPSEMPPSPLVWE.

Sufficient for interaction with DAPK3 regions lie at residues 1-125 (MSLC…KAHH) and 124-416 (HHHQ…SKRI). Required for interaction with TAB2 stretches follow at residues 1–304 (MSLC…VVTQ) and 434–527 (YHTC…LVWE). Disordered regions lie at residues 22–72 (AAAA…SSAA) and 90–140 (QQPY…DIEP). Positions 26-54 (GHHHHHHHHLPHLPPPHLHHHHHPQHHLH) are enriched in basic residues. The span at 103–119 (PGPAAAAPAQVQAAAAA) shows a compositional bias: low complexity. Over residues 122–131 (KAHHHQHSHH) the composition is skewed to basic residues. A Protein kinase domain is found at 138-427 (IEPDRPIGYG…AKDALAHPYL (290 aa)). ATP-binding positions include 144–152 (IGYGAFGVV) and lysine 167. Catalysis depends on aspartate 264, which acts as the Proton acceptor. Threonine 298 bears the Phosphothreonine; by autocatalysis mark. A TQE motif is present at residues 298–300 (TQE). A required for homodimerization and kinase activation and localization to the nucleus region spans residues 428–527 (DEGRLRYHTC…EMPPSPLVWE (100 aa)). Serine 522 carries the phosphoserine modification.

This sequence belongs to the protein kinase superfamily. CMGC Ser/Thr protein kinase family. MAP kinase subfamily. In terms of assembly, homodimer. Homodimerization is required for intermolecular autophosphorylation, kinase activation and nuclear localization. May interact with components of cullin-RING-based SCF (SKP1-CUL1-F-box protein) E3 ubiquitin-protein ligase complexes. Interacts with LEF1, MEF2A, MYBL1 and MYBL2. Interacts with the upstream activating kinases HIPK2 and MAP3K7/TAK1. Interaction with MAP3K7/TAK1 seems to be indirect, and may be mediated by other proteins such as STAT3, TAB1 and TAB2. Interacts with and phosphorylates a number of transcription factors including FOXO1, FOXO3, FOXO4, MYB, NOTCH1 and TCF7L2/TCF4. Interacts with DAPK3/ZIPK, and this interaction may disrupt interaction with transcription factors such as TCF7L2/TCF4. Interacts with RNF138/NARF. Interacts with ATF5; the interaction stabilizes ATF5 at the protein level in a kinase-independent manner. Mg(2+) serves as cofactor. Phosphorylated on Thr-298. Intermolecular autophosphorylation on Thr-298 activates the enzyme.

It is found in the nucleus. Its subcellular location is the cytoplasm. The enzyme catalyses L-seryl-[protein] + ATP = O-phospho-L-seryl-[protein] + ADP + H(+). It carries out the reaction L-threonyl-[protein] + ATP = O-phospho-L-threonyl-[protein] + ADP + H(+). With respect to regulation, activated by dimerization and subsequent intermolecular autophosphorylation on Thr-298. Activated by the non-canonical Wnt signaling pathway, in which WNT5A treatment leads to activation of MAP3K7/TAK1 and HIPK2, which subsequently phosphorylates and activates this protein. Other cytokines such as IL6 may also activate this regulatory circuit. In terms of biological role, serine/threonine-protein kinase that regulates a number of transcription factors with key roles in cell fate determination. Positive effector of the non-canonical Wnt signaling pathway, acting downstream of WNT5A, MAP3K7/TAK1 and HIPK2. Negative regulator of the canonical Wnt/beta-catenin signaling pathway. Binds to and phosphorylates TCF7L2/TCF4 and LEF1, promoting the dissociation of the TCF7L2/LEF1/beta-catenin complex from DNA, as well as the ubiquitination and subsequent proteolysis of LEF1. Together these effects inhibit the transcriptional activation of canonical Wnt/beta-catenin target genes. Negative regulator of the Notch signaling pathway. Binds to and phosphorylates NOTCH1, thereby preventing the formation of a transcriptionally active ternary complex of NOTCH1, RBPJ/RBPSUH and MAML1. Negative regulator of the MYB family of transcription factors. Phosphorylation of MYB leads to its subsequent proteolysis while phosphorylation of MYBL1 and MYBL2 inhibits their interaction with the coactivator CREBBP. Other transcription factors may also be inhibited by direct phosphorylation of CREBBP itself. Acts downstream of IL6 and MAP3K7/TAK1 to phosphorylate STAT3, which is in turn required for activation of NLK by MAP3K7/TAK1. Upon IL1B stimulus, cooperates with ATF5 to activate the transactivation activity of C/EBP subfamily members. Phosphorylates ATF5 but also stabilizes ATF5 protein levels in a kinase-independent manner. Acts as an inhibitor of the mTORC1 complex in response to osmotic stress by mediating phosphorylation of RPTOR, thereby preventing recruitment of the mTORC1 complex to lysosomes. The protein is Serine/threonine-protein kinase NLK (NLK) of Homo sapiens (Human).